A 368-amino-acid chain; its full sequence is Aminomethyltransferase (368 aa).

Belongs to the GcvT family. In terms of assembly, the glycine cleavage system is composed of four proteins: P, T, L and H.

It catalyses the reaction N(6)-[(R)-S(8)-aminomethyldihydrolipoyl]-L-lysyl-[protein] + (6S)-5,6,7,8-tetrahydrofolate = N(6)-[(R)-dihydrolipoyl]-L-lysyl-[protein] + (6R)-5,10-methylene-5,6,7,8-tetrahydrofolate + NH4(+). In terms of biological role, the glycine cleavage system catalyzes the degradation of glycine. The polypeptide is Aminomethyltransferase (Xylella fastidiosa (strain 9a5c)).